The following is a 324-amino-acid chain: Olfactory receptor 11H4 (324 aa).

The Extracellular segment spans residues 1–35; the sequence is MSFFFVDLRPMNRSATHIVTEFILLGFPGCWKIQI. The N-linked (GlcNAc...) asparagine glycan is linked to Asn12. The chain crosses the membrane as a helical span at residues 36–56; sequence FLFSLFLVIYVLTLLGNGAII. The Cytoplasmic portion of the chain corresponds to 57-64; the sequence is YAVRCNPL. The chain crosses the membrane as a helical span at residues 65–85; sequence LHTPMYFLLGNFAFLEIWYVS. Over 86-109 the chain is Extracellular; the sequence is STIPNMLVNILSKTKAISFSGCFL. A disulfide bond links Cys107 and Cys199. The chain crosses the membrane as a helical span at residues 110–130; the sequence is QFYFFFSLGTTECLFLAVMAY. Topologically, residues 131 to 149 are cytoplasmic; that stretch reads DRYLAICHPLQYPAIMTVR. Residues 150–170 traverse the membrane as a helical segment; sequence FCGKLVSFCWLIGFLGYPIPI. Topologically, residues 171–207 are extracellular; it reads FYISQLPFCGPNIIDHFLCDMDPLMALSCAPAPITEC. A helical transmembrane segment spans residues 208 to 227; it reads IFYTQSSLVLFFTSMYILRS. Over 228-247 the chain is Cytoplasmic; it reads YILLLTAVFQVPSAAGRRKA. The chain crosses the membrane as a helical span at residues 248 to 268; sequence FSTCGSHLVVVSLFYGTVMVM. Residues 269 to 281 are Extracellular-facing; it reads YVSPTYGIPTLLQ. The chain crosses the membrane as a helical span at residues 282–302; that stretch reads KILTLVYSVTTPLFNPLIYTL. Topologically, residues 303–324 are cytoplasmic; the sequence is RNKDMKLALRNVLFGMRIRQNS.

It belongs to the G-protein coupled receptor 1 family.

It localises to the cell membrane. In terms of biological role, odorant receptor. The polypeptide is Olfactory receptor 11H4 (OR11H4) (Homo sapiens (Human)).